The primary structure comprises 237 residues: N-demethylindolmycin N-methyltransferase (237 aa).

This sequence belongs to the methyltransferase superfamily.

It catalyses the reaction N-demethylindolmycin + S-adenosyl-L-methionine = indolmycin + S-adenosyl-L-homocysteine + H(+). In terms of biological role, involved in the biosynthesis of the antibiotic indolmycin, an inhibitor of the bacterial tryptophan-tRNA synthetases. Catalyzes the methylation of N-demethylindolmycin to yield indolmycin, with S-adenosylmethionine (AdoMet) acting as the methyl donor. The chain is N-demethylindolmycin N-methyltransferase from Streptomyces griseus.